Reading from the N-terminus, the 592-residue chain is V-type ATP synthase alpha chain 2 (592 aa).

237-244 (GGFGTGKT) is an ATP binding site.

It belongs to the ATPase alpha/beta chains family.

It catalyses the reaction ATP + H2O + 4 H(+)(in) = ADP + phosphate + 5 H(+)(out). Its function is as follows. Produces ATP from ADP in the presence of a proton gradient across the membrane. The V-type alpha chain is a catalytic subunit. This Clostridium tetani (strain Massachusetts / E88) protein is V-type ATP synthase alpha chain 2.